The following is a 600-amino-acid chain: Zinc metalloproteinase-disintegrin-like stejnihagin-A (600 aa).

Residues 1-20 (MIEVLLVTICLAVFPYQGSS) form the signal peptide. The propeptide occupies 21-191 (IILESGNVND…KASQLVVTAE (171 aa)). Q192 is subject to Pyrrolidone carboxylic acid. In terms of domain architecture, Peptidase M12B spans 198 to 389 (RYVKLAIVAD…YNPQCILNAP (192 aa)). Intrachain disulfides connect C306/C384, C346/C368, and C348/C351. The N-linked (GlcNAc...) asparagine glycan is linked to N317. Residue H331 coordinates Zn(2+). The active site involves E332. H335 and H341 together coordinate Zn(2+). The N-linked (GlcNAc...) asparagine glycan is linked to N367. Residues 397 to 483 (PPVCGNELLE…DCPTDDFHRN (87 aa)) form the Disintegrin domain. Positions 399, 402, 404, 406, 409, and 412 each coordinate Ca(2+). 14 disulfide bridges follow: C400-C429, C411-C424, C413-C419, C423-C446, C437-C443, C442-C468, C455-C475, C462-C494, C487-C499, C506-C556, C521-C565, C534-C544, C551-C587, and C581-C593. Positions 461 to 463 (ECD) match the D/ECD-tripeptide motif. N-linked (GlcNAc...) asparagine glycosylation occurs at N568.

This sequence belongs to the venom metalloproteinase (M12B) family. P-III subfamily. P-IIIa sub-subfamily. As to quaternary structure, monomer. Zn(2+) serves as cofactor. In terms of tissue distribution, expressed by the venom gland.

Its subcellular location is the secreted. In terms of biological role, this metalloproteinase-disintegrin-like impairs hemostasis in the envenomed animal. The polypeptide is Zinc metalloproteinase-disintegrin-like stejnihagin-A (Trimeresurus stejnegeri (Chinese green tree viper)).